We begin with the raw amino-acid sequence, 192 residues long: MNFSAILLLALGLAMDATAVAAARGLSVPAIRARHVLLVAGFFGGAQALMPVIGWLLGARIGPRVQAWDHWIAFVLLAFIGGKMLWEARGDGGDDGGEGETTADPFALSAMFVLAIATSIDALAVGITLPMLNAPFAISVVTIGVVTALLSAAGLFAGRRFGALLGKRLDLAGGVVLIGLGFKILLEHLVLS.

The next 6 helical transmembrane spans lie at 3–23, 36–56, 65–85, 112–132, 136–156, and 171–191; these read FSAI…VAAA, VLLV…IGWL, VQAW…GKML, FVLA…LPML, FAIS…AGLF, and LAGG…HLVL.

Belongs to the MntP (TC 9.B.29) family.

It is found in the cell inner membrane. Its function is as follows. Probably functions as a manganese efflux pump. In Sorangium cellulosum (strain So ce56) (Polyangium cellulosum (strain So ce56)), this protein is Putative manganese efflux pump MntP.